The following is a 423-amino-acid chain: SH2 domain-containing protein 5 (423 aa).

Residues 28–146 (AQYVGSFPVD…LLCRSFQLAY (119 aa)) enclose the PID domain. In terms of domain architecture, SH2 spans 296-392 (WAFAGISRPC…LDMGRLNPTY (97 aa)). The tract at residues 392 to 423 (YEEQDCGPPGRPPRTLRPLSHAKSEAELQGLG) is disordered.

Interacts with BCR.

The protein localises to the postsynaptic density. Its function is as follows. May be involved in synaptic plasticity regulation through the control of Rac-GTP levels. The sequence is that of SH2 domain-containing protein 5 from Homo sapiens (Human).